A 686-amino-acid polypeptide reads, in one-letter code: MKELFLEIGTEEIPAGFIPKAMADMEALLAKELENARISFDDIRTLGTPRRLALTVKGLPTVQPDAEITAMGPARNVAFDAEGKPTRAAEGFARGQGVDVASLTLVATEKGEYVAAVRKESGRPVPELLAEILPRLVANIPFRKSMRWGALDVRFARPIHWIVALFDGVVVPFTFGNIESGTISRGHRFMANQPFPVRDFAHYLEECERHFVIPDPERRQEIIRREIHRVAKAAGGHLLPDEGLLEEVSFLCEYPSAVHGTFSAEFLKVPREVLITSMRSHQRYFSIVDDAGKLMPGFITINNTLTEDPTVVVKGNERVLRARLSDARFFFEEDQKVKLETRVESLKNVVYQQKLGTSFEKMERFRALAEGLADLLNPAVKVKVSQAAFLCKADLVSGMVGEFPEVQGIMGREYALIEGEDAEVAAAIAEHYLPTQAGGELPASDIGAFVSMADKLDTICGCFGVGLIPTGSADPYALRRSALGIINIILDKGYRLSLEEQVDKALGLLAAKLTRPAVDVKADVLEFFRGRFVNLMADRHASDAVDAAVAAGCADLVDAAARIAALSEFRSHPDFEPLAVAFKRVGNIVKEGVDAPVDTALFQDAAEGLLNDAVQGVAVSVREKIATGAYLEALTEIAALRGPVDTFFDKVMVMAEDERVRTNRLALLTGIARMLGAIADFAKIAA.

Belongs to the class-II aminoacyl-tRNA synthetase family. In terms of assembly, tetramer of two alpha and two beta subunits.

The protein localises to the cytoplasm. The enzyme catalyses tRNA(Gly) + glycine + ATP = glycyl-tRNA(Gly) + AMP + diphosphate. The chain is Glycine--tRNA ligase beta subunit from Geobacter metallireducens (strain ATCC 53774 / DSM 7210 / GS-15).